A 241-amino-acid polypeptide reads, in one-letter code: Ubiquinone biosynthesis O-methyltransferase (241 aa).

S-adenosyl-L-methionine is bound by residues R44, G64, D85, and M129.

The protein belongs to the methyltransferase superfamily. UbiG/COQ3 family.

It carries out the reaction a 3-demethylubiquinol + S-adenosyl-L-methionine = a ubiquinol + S-adenosyl-L-homocysteine + H(+). The catalysed reaction is a 3-(all-trans-polyprenyl)benzene-1,2-diol + S-adenosyl-L-methionine = a 2-methoxy-6-(all-trans-polyprenyl)phenol + S-adenosyl-L-homocysteine + H(+). It functions in the pathway cofactor biosynthesis; ubiquinone biosynthesis. In terms of biological role, O-methyltransferase that catalyzes the 2 O-methylation steps in the ubiquinone biosynthetic pathway. The protein is Ubiquinone biosynthesis O-methyltransferase of Serratia proteamaculans (strain 568).